The chain runs to 362 residues: MEVVMPRALLVLLSAALALTPTRAGSHSLRYFYTSVSRPGAGDPRFIAVGYVDDTQFVRFDSDAATGRMEPRAPWVEQEGPEYWDRQTRTIKETARTFRVDLDTLRGYYNQSEAGSHTRQTMYGCDLGPDGRLLRGYSQDAYDGADYIALNEDLRSWTAADTAAQITQRKWEAAGVAELQWRNYLETTCVEWLRRYLEMGKETLLRADPPSTRVTHHPVSDHEVTLRCWALGFYPAEITLTWQRDGEDQTQDTEVVDTRPAGDGTFQKWAAVVVPSGQEQRYTCHVQHEGLPEPITRRWEPSPLSTIVIVSIAALVLLVVAGVIGAVIWRKQRSGGKGPGYSHAARDDSAQGSDVSLTAPRV.

Residues 1–24 (MEVVMPRALLVLLSAALALTPTRA) form the signal peptide. Residues 25 to 114 (GSHSLRYFYT…LRGYYNQSEA (90 aa)) form an alpha-1 region. Topologically, residues 25 to 306 (GSHSLRYFYT…RRWEPSPLST (282 aa)) are extracellular. Asn-110 carries an N-linked (GlcNAc...) asparagine glycan. The interval 115-207 (GSHTRQTMYG…EMGKETLLRA (93 aa)) is alpha-2. Cystine bridges form between Cys-125-Cys-189 and Cys-228-Cys-284. Residues 208–299 (DPPSTRVTHH…GLPEPITRRW (92 aa)) are alpha-3. Residues 210–296 (PSTRVTHHPV…QHEGLPEPIT (87 aa)) enclose the Ig-like C1-type domain. Residues 300-306 (EPSPLST) form a connecting peptide region. The helical transmembrane segment at 307 to 329 (IVIVSIAALVLLVVAGVIGAVIW) threads the bilayer. Residues 330–362 (RKQRSGGKGPGYSHAARDDSAQGSDVSLTAPRV) lie on the Cytoplasmic side of the membrane. Residues 333–362 (RSGGKGPGYSHAARDDSAQGSDVSLTAPRV) are disordered.

It belongs to the MHC class I family. In terms of assembly, heterodimer of an alpha chain and a beta chain (beta-2-microglobulin).

It is found in the membrane. In terms of biological role, involved in the presentation of foreign antigens to the immune system. The chain is DLA class I histocompatibility antigen, A9/A9 alpha chain from Canis lupus familiaris (Dog).